Consider the following 261-residue polypeptide: tRNA pseudouridine synthase A (261 aa).

The active-site Nucleophile is the Asp52. Tyr110 is a binding site for substrate.

It belongs to the tRNA pseudouridine synthase TruA family. As to quaternary structure, homodimer.

The enzyme catalyses uridine(38/39/40) in tRNA = pseudouridine(38/39/40) in tRNA. Functionally, formation of pseudouridine at positions 38, 39 and 40 in the anticodon stem and loop of transfer RNAs. In Coxiella burnetii (strain CbuK_Q154) (Coxiella burnetii (strain Q154)), this protein is tRNA pseudouridine synthase A.